The following is a 225-amino-acid chain: Uracil-DNA glycosylase (225 aa).

Residue aspartate 65 is the Proton acceptor of the active site.

The protein belongs to the uracil-DNA glycosylase (UDG) superfamily. UNG family.

It is found in the cytoplasm. The catalysed reaction is Hydrolyzes single-stranded DNA or mismatched double-stranded DNA and polynucleotides, releasing free uracil.. Excises uracil residues from the DNA which can arise as a result of misincorporation of dUMP residues by DNA polymerase or due to deamination of cytosine. The chain is Uracil-DNA glycosylase from Anoxybacillus flavithermus (strain DSM 21510 / WK1).